The sequence spans 271 residues: MKLVFYGAGNMAQAIFTGIINSSNLDANDIYLTNKSNEQALKAFAEKLGVNYSYDDATLLKDADYVFLGTKPHDFDALATRIKPHITKDNCFISIMAGIPIDYIKQQLECQNPVARIMPNTNAQVGHSVTGISFSNNFDPKSKDEINDLVKAFGSVIEVSEDHLHQVTAITGSGPAFLYHVFEQYVKAGTKLGLEKEQVEESIRNLIIGTSKMIERSDLSMAQLRKNITSKGGTTQAGLDTLSQYDLVSIFEDCLNAAVDRSIELSNIEDQ.

This sequence belongs to the pyrroline-5-carboxylate reductase family.

It is found in the cytoplasm. The catalysed reaction is L-proline + NADP(+) = (S)-1-pyrroline-5-carboxylate + NADPH + 2 H(+). It catalyses the reaction L-proline + NAD(+) = (S)-1-pyrroline-5-carboxylate + NADH + 2 H(+). It participates in amino-acid biosynthesis; L-proline biosynthesis; L-proline from L-glutamate 5-semialdehyde: step 1/1. Catalyzes the reduction of 1-pyrroline-5-carboxylate (PCA) to L-proline. The polypeptide is Pyrroline-5-carboxylate reductase (Staphylococcus aureus (strain COL)).